Consider the following 62-residue polypeptide: Photosystem II reaction center protein Z (62 aa).

2 consecutive transmembrane segments (helical) span residues 8-28 and 41-61; these read AVFALIATSSILLISVPVVFA and FSGTSLWIGLVFLVAILNSLI.

Belongs to the PsbZ family. As to quaternary structure, PSII is composed of 1 copy each of membrane proteins PsbA, PsbB, PsbC, PsbD, PsbE, PsbF, PsbH, PsbI, PsbJ, PsbK, PsbL, PsbM, PsbT, PsbY, PsbZ, Psb30/Ycf12, at least 3 peripheral proteins of the oxygen-evolving complex and a large number of cofactors. It forms dimeric complexes.

The protein resides in the plastid. Its subcellular location is the chloroplast thylakoid membrane. In terms of biological role, may control the interaction of photosystem II (PSII) cores with the light-harvesting antenna, regulates electron flow through the 2 photosystem reaction centers. PSII is a light-driven water plastoquinone oxidoreductase, using light energy to abstract electrons from H(2)O, generating a proton gradient subsequently used for ATP formation. This chain is Photosystem II reaction center protein Z, found in Amborella trichopoda.